Here is a 420-residue protein sequence, read N- to C-terminus: Transcription factor TCP4 (420 aa).

Positions 1 to 27 (MSDDQFHHPPPPSSMRHRSTSDAADGG) are disordered. The 59-residue stretch at 45-103 (RKDRHSKVCTAKGPRDRRVRLSAHTAIQFYDVQDRLGFDRPSKAVDWLIKKAKTSIDEL) folds into the TCP domain. 4 disordered regions span residues 121–176 (NAKP…PSMD), 228–256 (LSLQ…ASEP), 353–379 (HQSI…IPGI), and 399–420 (QEEE…ISRH). The span at 410–420 (KPSSASSISRH) shows a compositional bias: polar residues.

In terms of assembly, interacts with AHL27 and AHL29. Interacts with SPL. Interacts with JGB. Interacts with GI (via N-terminus). Expressed in cotyledons, particularly in the vascular region, in leaves, roots, buds, flowers and immature siliques.

Its subcellular location is the nucleus. In terms of biological role, transcription factor playing a pivotal role in the control of morphogenesis of shoot organs by negatively regulating the expression of boundary-specific genes such as CUC genes, probably through the induction of miRNA (e.g. miR164). Required during early steps of embryogenesis. Participates in ovule development. Activates LOX2 expression by binding to the 5'-GGACCA-3' motif found in its promoter. Activates YUC5 transcription by binding to the 5'-GTGGGCCA-3' motif found in its promoter. Through the activation of YUC5 transcription, integrates the auxin response to a brassinosteroid-dependent molecular circuit that promotes cell elongation in hypocotyls. Activates GIS transcription by binding to the 5'-TGGTCC-3' motif found in its promoter. Involved in the regulation of trichome branching through the activation of GIS transcription. Activates CO transcription by binding to the 5'-GGACCAC-3' motif found in its promoter. Involved in the regulation of photoperiodic flowering through the activation of CO transcription. Activates TCL1 and TCL2 transcription by binding to the 5'-TGGCCA-3' and 5'-GTGGACCA-3' motifS found in their respective promoters. Involved in the suppression of trichome initiaition through the activation of TCL1 and TCL2 transcription. Activates HAT2 transcription by binding to the 5'-TGGTCCAC-3' motif found in its promoter. Through the activation of HAT2 transcription, involved in the auxin-independent reprogramming of mitotic cells to exit division and acquire differentiation competence within the transition zone. This Arabidopsis thaliana (Mouse-ear cress) protein is Transcription factor TCP4 (TCP4).